The chain runs to 202 residues: ADP-ribosylation factor-like protein 15 (202 aa).

GTP is bound by residues 39–46 (GLTGSGKT), 82–86 (ELGGA), and 142–145 (NHQD).

It belongs to the small GTPase superfamily. Arf family.

This Bos taurus (Bovine) protein is ADP-ribosylation factor-like protein 15 (ARL15).